The primary structure comprises 114 residues: Nucleoid-associated protein slr1847 (114 aa).

It belongs to the YbaB/EbfC family. Homodimer.

It localises to the cytoplasm. It is found in the nucleoid. Functionally, binds to DNA and alters its conformation. May be involved in regulation of gene expression, nucleoid organization and DNA protection. The protein is Nucleoid-associated protein slr1847 of Synechocystis sp. (strain ATCC 27184 / PCC 6803 / Kazusa).